The primary structure comprises 219 residues: Protein YNG1 (219 aa).

A PHD-type; degenerate zinc finger spans residues 155-204 (EVYCFCRNVSYGPMVACDNPACPFEWFHYGCVGLKQAPKGKWYCSKDCKE). Zn(2+) contacts are provided by Cys-158, Cys-160, Cys-171, Cys-176, His-182, Cys-185, Cys-198, and Cys-202.

This sequence belongs to the ING family. Component of the NuA3 histone acetyltransferase (HAT) complex. The NuA3 HAT complex has 2 functionally distinct forms that participate in transcription. The NuA3a HAT complex is composed of at least NTO1, SAS3, TAF14, YNG1 and EAF6. The NuA3b HAT complex contains an additional subunit, PDP3. Interacts with H3K4me3 and to a lesser extent with H3K4me2.

It is found in the nucleus. Histone-binding component of the NuA3a histone acetyltransferase complex. Targets the NuA3a HAT complex via histone H3K4me3 to facilitate transcription initiation at promoter regions. SAS3 then acetylates H3K14, leading to transcription initiation at a subset of genes. YNG1 is required for the HAT activity of NuA3 but not for its integrity. Mediates the interaction of SAS3 with nucleosomes. The polypeptide is Protein YNG1 (YNG1) (Saccharomyces cerevisiae (strain ATCC 204508 / S288c) (Baker's yeast)).